Consider the following 122-residue polypeptide: Cofilin-5 (122 aa).

One can recognise an ADF-H domain in the interval 3–122 (SRIIEIDPNC…VKDLIQLSNL (120 aa)).

Belongs to the actin-binding proteins ADF family.

The protein resides in the cytoplasm. It localises to the cytoskeleton. Its function is as follows. Controls actin polymerization and depolymerization. The protein is Cofilin-5 (cofF) of Dictyostelium discoideum (Social amoeba).